Consider the following 115-residue polypeptide: Probable non-functional immunoglobulin heavy variable 3-38-3 (115 aa).

An N-terminal signal peptide occupies residues 1-19; that stretch reads MQFVLSWVFLVAILKGVQC. The segment at 20-44 is framework-1; the sequence is EVQLVESRGVLVQPGGSLRLSCAAS. One can recognise an Ig-like domain in the interval 31 to 115; the sequence is VQPGGSLRLS…EDTAVYYCKK (85 aa). A disulfide bridge connects residues Cys-41 and Cys-113. A complementarity-determining-1 region spans residues 45 to 52; that stretch reads GFTVSSNE. The tract at residues 53–69 is framework-2; the sequence is MSWVRQAPGKGLEWVSS. The tract at residues 70–75 is complementarity-determining-2; it reads ISGGST. The framework-3 stretch occupies residues 76-113; it reads YYADSRKGRFTISRDNSKNTLHLQMNSLRAEDTAVYYC. Residues 114–115 form a complementarity-determining-3 region; sequence KK.

Immunoglobulins are composed of two identical heavy chains and two identical light chains; disulfide-linked.

It localises to the secreted. Its subcellular location is the cell membrane. In terms of biological role, probable non-functional open reading frame (ORF) of V region of the variable domain of immunoglobulin heavy chains. Non-functional ORF generally cannot participate in the synthesis of a productive immunoglobulin chain due to altered V-(D)-J or switch recombination and/or splicing site (at mRNA level) and/or conserved amino acid change (protein level). Immunoglobulins, also known as antibodies, are membrane-bound or secreted glycoproteins produced by B lymphocytes. In the recognition phase of humoral immunity, the membrane-bound immunoglobulins serve as receptors which, upon binding of a specific antigen, trigger the clonal expansion and differentiation of B lymphocytes into immunoglobulins-secreting plasma cells. Secreted immunoglobulins mediate the effector phase of humoral immunity, which results in the elimination of bound antigens. The antigen binding site is formed by the variable domain of one heavy chain, together with that of its associated light chain. Thus, each immunoglobulin has two antigen binding sites with remarkable affinity for a particular antigen. The variable domains are assembled by a process called V-(D)-J rearrangement and can then be subjected to somatic hypermutations which, after exposure to antigen and selection, allow affinity maturation for a particular antigen. This Homo sapiens (Human) protein is Probable non-functional immunoglobulin heavy variable 3-38-3.